The following is a 970-amino-acid chain: Protein translocase subunit SecA (970 aa).

ATP contacts are provided by residues Gln-99, 117-121 (GEGKT), and Asp-631.

The protein belongs to the SecA family. As to quaternary structure, monomer and homodimer. Part of the essential Sec protein translocation apparatus which comprises SecA, SecYEG and auxiliary proteins SecDF. Other proteins may also be involved.

Its subcellular location is the cell inner membrane. It is found in the cytoplasm. It carries out the reaction ATP + H2O + cellular proteinSide 1 = ADP + phosphate + cellular proteinSide 2.. Functionally, part of the Sec protein translocase complex. Interacts with the SecYEG preprotein conducting channel. Has a central role in coupling the hydrolysis of ATP to the transfer of proteins into and across the cell membrane, serving as an ATP-driven molecular motor driving the stepwise translocation of polypeptide chains across the membrane. The protein is Protein translocase subunit SecA of Chlamydia caviae (strain ATCC VR-813 / DSM 19441 / 03DC25 / GPIC) (Chlamydophila caviae).